The chain runs to 491 residues: MDTAPDHREPQEQGESRKWYEMTASEFYVYVVAFMCGVSMMMPVNAVFSAPAYIMTYYRYAMQDPEAVPLYTNFWNNVMTYYNLIGIVTSLIMEPLTLLSWFRRIPMKVRLLGGLVILIVEIIVLMVVPARGTSEAGAVATICCTGFIGGFGKSIFESTTYGMFGAFPSSFTSTMMGGVGMSGVLTSLLQIIVKAALPDSYEGVKKQSKIYYGLDVGIQGMTFVALILLRFNSFAQNYFGDLGAVKSKVDAGKLSAEALCHTDEHPTHDKEGRNSSSGKEVPALGEVQTAAAKSEGPDAVEESSWPHEVEGPTSNEILVATAIFSTLRRVKWMFVACAFNFLITLFLFPGIAVGMFPDSKWFSTIAVFIFNVFDVLGRFSPSLKLMWPRSYKQRWIIVAASFARVIFVPLLLLHSYHYIPGEAYGYVMEVIFGFSNGYVGSMALVLGPQSKGIDNDGKRFVAGTLMGISILVGGTIGTVLSIMTQTIRATY.

6 helical membrane passes run 27–47 (FYVY…VNAV), 82–102 (YNLI…LSWF), 109–129 (VRLL…MVVP), 136–156 (AGAV…KSIF), 173–193 (STMM…QIIV), and 209–229 (KIYY…LILL). Residues 260-273 (CHTDEHPTHDKEGR) are compositionally biased toward basic and acidic residues. Disordered regions lie at residues 260–280 (CHTD…SGKE) and 290–309 (AAAK…PHEV). An N-linked (GlcNAc...) asparagine glycan is attached at N274. Transmembrane regions (helical) follow at residues 333–353 (MFVA…GIAV), 361–381 (WFST…RFSP), 395–415 (WIIV…LLHS), 427–447 (VMEV…LVLG), and 460–480 (FVAG…GTVL).

Belongs to the SLC29A/ENT transporter (TC 2.A.57) family.

Its subcellular location is the membrane. It carries out the reaction adenosine(in) + H(+)(in) = adenosine(out) + H(+)(out). It catalyses the reaction uridine(in) + H(+)(in) = uridine(out) + H(+)(out). Its function is as follows. Sodium-independent high affinity nucleoside:H(+) symporter; transports adenosine and uridine. Can transport cytidine and thymidine. This is Nucleoside transporter 1.1 from Leishmania donovani.